Consider the following 65-residue polypeptide: Putative potassium channel toxin Ts21 (65 aa).

The first 25 residues, 1–25 (MNKVYLVAILVLSVLLVANVSPIEG), serve as a signal peptide directing secretion. Cystine bridges form between Cys-31–Cys-53, Cys-38–Cys-61, and Cys-42–Cys-63.

It belongs to the short scorpion toxin superfamily. Potassium channel inhibitor family. Alpha-KTx 11 subfamily. In terms of tissue distribution, expressed by the venom gland.

It is found in the secreted. In terms of biological role, this recombinant toxin inhibits the mammalian voltage-gated potassium channels Kv1.3/KCNA3 in vitro with an IC(50) of 26.40 nM. This chain is Putative potassium channel toxin Ts21, found in Tityus serrulatus (Brazilian scorpion).